A 349-amino-acid chain; its full sequence is Isopentenyl-diphosphate delta-isomerase (349 aa).

Residue 6–7 coordinates substrate; that stretch reads RK. Residues 62 to 64, Ser-93, and Asn-122 each bind FMN; that span reads AMT. Gln-152 provides a ligand contact to substrate. Glu-153 is a Mg(2+) binding site. FMN contacts are provided by residues Lys-184, Thr-214, 258–259, and 280–281; these read GG and AG.

Belongs to the IPP isomerase type 2 family. As to quaternary structure, homooctamer. Dimer of tetramers. It depends on FMN as a cofactor. NADPH serves as cofactor. Mg(2+) is required as a cofactor.

The protein resides in the cytoplasm. It carries out the reaction isopentenyl diphosphate = dimethylallyl diphosphate. Functionally, involved in the biosynthesis of isoprenoids. Catalyzes the 1,3-allylic rearrangement of the homoallylic substrate isopentenyl (IPP) to its allylic isomer, dimethylallyl diphosphate (DMAPP). This Bacillus cereus (strain ATCC 14579 / DSM 31 / CCUG 7414 / JCM 2152 / NBRC 15305 / NCIMB 9373 / NCTC 2599 / NRRL B-3711) protein is Isopentenyl-diphosphate delta-isomerase.